We begin with the raw amino-acid sequence, 250 residues long: 3-deoxy-manno-octulosonate cytidylyltransferase (250 aa).

Belongs to the KdsB family.

The protein localises to the cytoplasm. It carries out the reaction 3-deoxy-alpha-D-manno-oct-2-ulosonate + CTP = CMP-3-deoxy-beta-D-manno-octulosonate + diphosphate. Its pathway is nucleotide-sugar biosynthesis; CMP-3-deoxy-D-manno-octulosonate biosynthesis; CMP-3-deoxy-D-manno-octulosonate from 3-deoxy-D-manno-octulosonate and CTP: step 1/1. The protein operates within bacterial outer membrane biogenesis; lipopolysaccharide biosynthesis. Its function is as follows. Activates KDO (a required 8-carbon sugar) for incorporation into bacterial lipopolysaccharide in Gram-negative bacteria. The sequence is that of 3-deoxy-manno-octulosonate cytidylyltransferase from Janthinobacterium sp. (strain Marseille) (Minibacterium massiliensis).